The primary structure comprises 477 residues: Exodeoxyribonuclease 7 large subunit (477 aa).

Residues 456 to 477 are disordered; sequence GGTVAPRKAPPKKPGGGQGSLL.

Belongs to the XseA family. In terms of assembly, heterooligomer composed of large and small subunits.

It is found in the cytoplasm. The enzyme catalyses Exonucleolytic cleavage in either 5'- to 3'- or 3'- to 5'-direction to yield nucleoside 5'-phosphates.. Bidirectionally degrades single-stranded DNA into large acid-insoluble oligonucleotides, which are then degraded further into small acid-soluble oligonucleotides. The protein is Exodeoxyribonuclease 7 large subunit of Parvibaculum lavamentivorans (strain DS-1 / DSM 13023 / NCIMB 13966).